The chain runs to 152 residues: Histone H2B.1 (152 aa).

A compositionally biased stretch (basic and acidic residues) spans 1-28 (MAPKAEKKPAAKKPAEEEPAAEKAEKTP). Positions 1-60 (MAPKAEKKPAAKKPAEEEPAAEKAEKTPAGKKPKAEKRLPAGKSAAKEGGDKKGKKKAKK) are disordered. Lys-7 and Lys-37 each carry N6-acetyllysine. A Glycyl lysine isopeptide (Lys-Gly) (interchain with G-Cter in ubiquitin) cross-link involves residue Lys-148.

Belongs to the histone H2B family. In terms of assembly, the nucleosome is a histone octamer containing two molecules each of H2A, H2B, H3 and H4 assembled in one H3-H4 heterotetramer and two H2A-H2B heterodimers. The octamer wraps approximately 147 bp of DNA. Post-translationally, can be acetylated to form H2BK6ac and H2BK33ac. In terms of processing, monoubiquitinated to form H2BK143ub1; may give a specific tag for epigenetic transcriptional activation.

It is found in the nucleus. Its subcellular location is the chromosome. Its function is as follows. Core component of nucleosome. Nucleosomes wrap and compact DNA into chromatin, limiting DNA accessibility to the cellular machineries which require DNA as a template. Histones thereby play a central role in transcription regulation, DNA repair, DNA replication and chromosomal stability. DNA accessibility is regulated via a complex set of post-translational modifications of histones, also called histone code, and nucleosome remodeling. The sequence is that of Histone H2B.1 from Triticum aestivum (Wheat).